The following is a 138-amino-acid chain: uncharacterized protein (138 aa).

Disordered regions lie at residues 1–23 (MPESAPSTPPSVNRRHEPEMLSE) and 35–83 (ASPS…EDPV). The span at 60–69 (DEETIPEEDD) shows a compositional bias: acidic residues.

This is an uncharacterized protein from Schizosaccharomyces pombe (strain 972 / ATCC 24843) (Fission yeast).